Reading from the N-terminus, the 195-residue chain is Small ribosomal subunit protein uS5 (195 aa).

The interval 1-20 is disordered; that stretch reads MAREREGGGRGRREDREERD. One can recognise an S5 DRBM domain in the interval 23–86; sequence FVDKLVHINR…EAAKRGLIRV (64 aa). The interval 161-195 is disordered; the sequence is DSPRSVAARRGIKVSTLQSRRRDADPADQSEAAVA.

This sequence belongs to the universal ribosomal protein uS5 family. In terms of assembly, part of the 30S ribosomal subunit. Contacts proteins S4 and S8.

In terms of biological role, with S4 and S12 plays an important role in translational accuracy. Functionally, located at the back of the 30S subunit body where it stabilizes the conformation of the head with respect to the body. The sequence is that of Small ribosomal subunit protein uS5 from Methylobacterium radiotolerans (strain ATCC 27329 / DSM 1819 / JCM 2831 / NBRC 15690 / NCIMB 10815 / 0-1).